The chain runs to 176 residues: NAD(P)H-quinone oxidoreductase subunit 6, chloroplastic (176 aa).

A run of 5 helical transmembrane segments spans residues 10–30, 33–53, 61–81, 92–112, and 153–173; these read FLLVFLELGLILGSLGVVFLP, IYSAFSLGLVLFCISLFYILL, AQLLIYVGAINVLIIFAVMFM, LWTVGDGVTSMVCTSLFISLI, and FLPFELISIILLVALIGAIAI.

It belongs to the complex I subunit 6 family. NDH is composed of at least 16 different subunits, 5 of which are encoded in the nucleus.

Its subcellular location is the plastid. The protein localises to the chloroplast thylakoid membrane. It carries out the reaction a plastoquinone + NADH + (n+1) H(+)(in) = a plastoquinol + NAD(+) + n H(+)(out). The enzyme catalyses a plastoquinone + NADPH + (n+1) H(+)(in) = a plastoquinol + NADP(+) + n H(+)(out). NDH shuttles electrons from NAD(P)H:plastoquinone, via FMN and iron-sulfur (Fe-S) centers, to quinones in the photosynthetic chain and possibly in a chloroplast respiratory chain. The immediate electron acceptor for the enzyme in this species is believed to be plastoquinone. Couples the redox reaction to proton translocation, and thus conserves the redox energy in a proton gradient. This Jasminum nudiflorum (Winter jasmine) protein is NAD(P)H-quinone oxidoreductase subunit 6, chloroplastic (ndhG).